Here is a 166-residue protein sequence, read N- to C-terminus: Crossover junction endodeoxyribonuclease RuvC (166 aa).

Active-site residues include Asp11, Glu70, and Asp142. Mg(2+)-binding residues include Asp11, Glu70, and Asp142.

It belongs to the RuvC family. In terms of assembly, homodimer which binds Holliday junction (HJ) DNA. The HJ becomes 2-fold symmetrical on binding to RuvC with unstacked arms; it has a different conformation from HJ DNA in complex with RuvA. In the full resolvosome a probable DNA-RuvA(4)-RuvB(12)-RuvC(2) complex forms which resolves the HJ. The cofactor is Mg(2+).

The protein localises to the cytoplasm. It catalyses the reaction Endonucleolytic cleavage at a junction such as a reciprocal single-stranded crossover between two homologous DNA duplexes (Holliday junction).. The RuvA-RuvB-RuvC complex processes Holliday junction (HJ) DNA during genetic recombination and DNA repair. Endonuclease that resolves HJ intermediates. Cleaves cruciform DNA by making single-stranded nicks across the HJ at symmetrical positions within the homologous arms, yielding a 5'-phosphate and a 3'-hydroxyl group; requires a central core of homology in the junction. The consensus cleavage sequence is 5'-(A/T)TT(C/G)-3'. Cleavage occurs on the 3'-side of the TT dinucleotide at the point of strand exchange. HJ branch migration catalyzed by RuvA-RuvB allows RuvC to scan DNA until it finds its consensus sequence, where it cleaves and resolves the cruciform DNA. In Nitratidesulfovibrio vulgaris (strain ATCC 29579 / DSM 644 / CCUG 34227 / NCIMB 8303 / VKM B-1760 / Hildenborough) (Desulfovibrio vulgaris), this protein is Crossover junction endodeoxyribonuclease RuvC.